The chain runs to 164 residues: Crossover junction endodeoxyribonuclease RuvC (164 aa).

Residues aspartate 7, glutamate 66, and aspartate 138 contribute to the active site. Mg(2+) is bound by residues aspartate 7, glutamate 66, and aspartate 138.

Belongs to the RuvC family. Homodimer which binds Holliday junction (HJ) DNA. The HJ becomes 2-fold symmetrical on binding to RuvC with unstacked arms; it has a different conformation from HJ DNA in complex with RuvA. In the full resolvosome a probable DNA-RuvA(4)-RuvB(12)-RuvC(2) complex forms which resolves the HJ. It depends on Mg(2+) as a cofactor.

It localises to the cytoplasm. The catalysed reaction is Endonucleolytic cleavage at a junction such as a reciprocal single-stranded crossover between two homologous DNA duplexes (Holliday junction).. In terms of biological role, the RuvA-RuvB-RuvC complex processes Holliday junction (HJ) DNA during genetic recombination and DNA repair. Endonuclease that resolves HJ intermediates. Cleaves cruciform DNA by making single-stranded nicks across the HJ at symmetrical positions within the homologous arms, yielding a 5'-phosphate and a 3'-hydroxyl group; requires a central core of homology in the junction. The consensus cleavage sequence is 5'-(A/T)TT(C/G)-3'. Cleavage occurs on the 3'-side of the TT dinucleotide at the point of strand exchange. HJ branch migration catalyzed by RuvA-RuvB allows RuvC to scan DNA until it finds its consensus sequence, where it cleaves and resolves the cruciform DNA. This is Crossover junction endodeoxyribonuclease RuvC from Paracoccus denitrificans (strain Pd 1222).